A 434-amino-acid polypeptide reads, in one-letter code: uncharacterized protein (434 aa).

The N-terminal stretch at 1–17 (MTFLLFQLLVLLRYSIG) is a signal peptide. The next 12 helical transmembrane spans lie at 48 to 68 (AAISLDFIFIVFPMLLFFTVL), 70 to 90 (EWVYHGTGLLSLLVLILSVTA), 112 to 132 (YRVALMLITCLCILAVDFTIF), 141 to 161 (TYGTSLMDLGVGSFVLANAVV), 173 to 193 (WITGIKATAPLLLLGFIRLVT), 206 to 226 (YGVHWNFFFTLAAISILTSFV), 232 to 252 (YCGLLGFAVLAGYQTWLLSGL), 271 to 291 (EGVYSILGYWGMYLLGVHLGY), 305 to 325 (TSSIARVFLVSLLLWIVTILF), 344 to 364 (WVLAQDLQALGIFMLSSYIPL), 380 to 400 (ATFLLANLVTGMVNLTVDTIF), and 404 to 424 (FSSLLILTAYAFALSAIIGTI).

The protein localises to the membrane. This is an uncharacterized protein from Arabidopsis thaliana (Mouse-ear cress).